The primary structure comprises 864 residues: Leucine--tRNA ligase (864 aa).

The short motif at 42-52 is the 'HIGH' region element; it reads PYPSGKLHMGH. The 'KMSKS' region signature appears at 624–628; sequence KMSKS. Residue Lys-627 coordinates ATP.

Belongs to the class-I aminoacyl-tRNA synthetase family.

The protein localises to the cytoplasm. The catalysed reaction is tRNA(Leu) + L-leucine + ATP = L-leucyl-tRNA(Leu) + AMP + diphosphate. The sequence is that of Leucine--tRNA ligase from Burkholderia multivorans (strain ATCC 17616 / 249).